We begin with the raw amino-acid sequence, 323 residues long: Serine/threonine-protein phosphatase PP1-gamma catalytic subunit (323 aa).

At alanine 2 the chain carries N-acetylalanine. Residues aspartate 64, histidine 66, aspartate 92, and asparagine 124 each contribute to the Mn(2+) site. Histidine 125 (proton donor) is an active-site residue. Histidine 173 and histidine 248 together coordinate Mn(2+). The tract at residues 302-323 (KKPNATRPVTPPRGMITKQAKK) is disordered. Phosphothreonine is present on residues threonine 307 and threonine 311.

Belongs to the PPP phosphatase family. PP-1 subfamily. As to quaternary structure, PP1 comprises a catalytic subunit, PPP1CA, PPP1CB or PPP1CC, which is folded into its native form by inhibitor 2 and glycogen synthetase kinase 3, and then complexed to one or several targeting or regulatory subunits. PPP1R12A, PPP1R12B and PPP1R12C mediate binding to myosin. PPP1R3A (in skeletal muscle), PPP1R3B (in sliver), PPP1R3C, PPP1R3D and PPP1R3F (in brain) mediate binding to glycogen. PPP1R15A and PPP1R15B mediate binding to EIF2S1. Part of a complex containing PPP1R15B, PP1 and NCK1/2. Interacts with PPP1R3B, PPP1R7 and CDCA2. Isoform 2 interacts with SPZ1. Interacts with IKFZ1; the interaction targets PPP1CC to pericentromeric heterochromatin, dephosphorylates IKAROS, stabilizes it and prevents it from degradation. Interacts with NOM1 and PPP1R8. Component of the PTW/PP1 phosphatase complex, composed of PPP1R10/PNUTS, TOX4, WDR82, and PPP1CA or PPP1CB or PPP1CC. Interacts with PPP1R8. Interacts with NEK2. Interacts with URI1; the interaction is phosphorylation-dependent and occurs in a growth factor-dependent manner. Interacts with FOXP3. Interacts with TMEM225 (via RVxF motif). Interacts with MKI67. Interacts with RRP1B; this targets PPP1CC to the nucleolus. Found in a complex with PPP1CA, PPP1CC, SHC1 and PEAK1. Interacts with DYNLT4. Interacts (via RVxF motif) with FIRRM; regulates PLK1 kinase activity. Interacts with the KNL1 complex subunit KNL1; the interaction is direct and mutually exclusive with KNL1 binding to microtubules. Component of the SHOC2-MRAS-PP1c (SMP) complex consisting of SHOC2, GTP-bound M-Ras/MRAS and the catalytic subunit of protein phosphatase 1 (either PPP1CA, PPP1CB or PPP1CC). SHOC2 and PP1c preferably bind M-Ras/MRAS, but they also bind K-Ras/KRAS, N-Ras/NRAS and H-Ras/HRAS; these interactions are GTP-dependent and both SHOC2 and PP1c are required to form a stable complex. Interacts with SHOC2 in the absence of Ras GTPases. Requires Mn(2+) as cofactor. Phosphorylated by NEK2. Isoform 2 is expressed only in testis, in the late spermatocytes and early spematids (at protein level).

The protein resides in the cytoplasm. The protein localises to the nucleus. Its subcellular location is the cleavage furrow. It localises to the nucleolus. It is found in the nucleoplasm. The protein resides in the chromosome. The protein localises to the centromere. Its subcellular location is the kinetochore. It localises to the nucleus speckle. It is found in the midbody. The protein resides in the mitochondrion. The protein localises to the cytoskeleton. Its subcellular location is the microtubule organizing center. It catalyses the reaction O-phospho-L-seryl-[protein] + H2O = L-seryl-[protein] + phosphate. It carries out the reaction O-phospho-L-threonyl-[protein] + H2O = L-threonyl-[protein] + phosphate. With respect to regulation, inactivated by binding to URI1. Its function is as follows. Protein phosphatase that associates with over 200 regulatory proteins to form highly specific holoenzymes which dephosphorylate hundreds of biological targets. Protein phosphatase 1 (PP1) is essential for cell division, and participates in the regulation of glycogen metabolism, muscle contractility and protein synthesis. Dephosphorylates RPS6KB1. Involved in regulation of ionic conductances and long-term synaptic plasticity. May play an important role in dephosphorylating substrates such as the postsynaptic density-associated Ca(2+)/calmodulin dependent protein kinase II. Component of the PTW/PP1 phosphatase complex, which plays a role in the control of chromatin structure and cell cycle progression during the transition from mitosis into interphase. In balance with CSNK1D and CSNK1E, determines the circadian period length, through the regulation of the speed and rhythmicity of PER1 and PER2 phosphorylation. May dephosphorylate CSNK1D and CSNK1E. Regulates the recruitment of the SKA complex to kinetochores. Core component of the SHOC2-MRAS-PP1c (SMP) holophosphatase complex that regulates the MAPK pathway activation. Dephosphorylates MKI67 at the onset of anaphase. The SMP complex specifically dephosphorylates the inhibitory phosphorylation at 'Ser-259' of RAF1 kinase, 'Ser-365' of BRAF kinase and 'Ser-214' of ARAF kinase, stimulating their kinase activities. The SMP complex enhances the dephosphorylation activity and substrate specificity of PP1c. Required for normal male fertility. The polypeptide is Serine/threonine-protein phosphatase PP1-gamma catalytic subunit (Ppp1cc) (Rattus norvegicus (Rat)).